The sequence spans 245 residues: MMKTLVVVLSLSLTILSFGGAHAATISFKNNCPYMVWPGTLTSDQKPQLSTTGFELASQASFQLDTPVPWNGRFWARTGCSTDASGKFVCATADCASGQVMCNGNGAIPPATLAEFNIPAGGGQDFYDVSLVDGFNLPMSVTPQGGTGDCKTASCPANVNAVCPSELQKKGSDGSVVACLSACVKFGTPQYCCTPPQNTPETCPPTNYSEIFHNACPDAYSYAYDDKRGTFTCNGGPNYAITFCP.

Positions 1–23 are cleaved as a signal peptide; it reads MMKTLVVVLSLSLTILSFGGAHA. 8 disulfides stabilise this stretch: C32/C244, C80/C90, C95/C102, C150/C233, C155/C216, C163/C179, C183/C192, and C193/C203.

It belongs to the thaumatin family. Abundantly expressed in ripening fruit.

It is found in the secreted. It catalyses the reaction Hydrolysis of (1-&gt;3)-beta-D-glucosidic linkages in (1-&gt;3)-beta-D-glucans.. This Prunus avium (Cherry) protein is Glucan endo-1,3-beta-glucosidase.